The following is a 215-amino-acid chain: Somatotropin (215 aa).

An N-terminal signal peptide occupies residues 1–25 (MAPGARISLLLLITFTLLGPQRSGA). A Zn(2+)-binding site is contributed by H44. A disulfide bridge connects residues C77 and C188. Phosphoserine is present on S130. Residue E197 participates in Zn(2+) binding. C205 and C213 form a disulfide bridge.

The protein belongs to the somatotropin/prolactin family.

It localises to the secreted. Its function is as follows. Plays an important role in growth control. Its major role in stimulating body growth is to stimulate the liver and other tissues to secrete IGF1. It stimulates both the differentiation and proliferation of myoblasts. It also stimulates amino acid uptake and protein synthesis in muscle and other tissues. The sequence is that of Somatotropin (GH1) from Trichosurus vulpecula (Brush-tailed possum).